The chain runs to 88 residues: Small ribosomal subunit protein bS20 (88 aa).

The tract at residues 1–21 is disordered; it reads MANTTSAKKATRKIARRTAVN.

The protein belongs to the bacterial ribosomal protein bS20 family.

Binds directly to 16S ribosomal RNA. The polypeptide is Small ribosomal subunit protein bS20 (Sinorhizobium fredii (strain NBRC 101917 / NGR234)).